The chain runs to 291 residues: 4-diphosphocytidyl-2-C-methyl-D-erythritol kinase (291 aa).

Lys-10 is an active-site residue. 99-109 (PMGGGLGGGSS) provides a ligand contact to ATP. Asp-141 is a catalytic residue.

It belongs to the GHMP kinase family. IspE subfamily. In terms of assembly, homodimer.

The catalysed reaction is 4-CDP-2-C-methyl-D-erythritol + ATP = 4-CDP-2-C-methyl-D-erythritol 2-phosphate + ADP + H(+). The protein operates within isoprenoid biosynthesis; isopentenyl diphosphate biosynthesis via DXP pathway; isopentenyl diphosphate from 1-deoxy-D-xylulose 5-phosphate: step 3/6. In terms of biological role, catalyzes the phosphorylation of the position 2 hydroxy group of 4-diphosphocytidyl-2C-methyl-D-erythritol. This Proteus mirabilis (strain HI4320) protein is 4-diphosphocytidyl-2-C-methyl-D-erythritol kinase.